Reading from the N-terminus, the 333-residue chain is Glutamyl-tRNA reductase (333 aa).

Residues 60–63 (TCHR), S110, 115–117 (ETE), and Q121 each bind substrate. C61 (nucleophile) is an active-site residue. 189 to 194 (GYSEIN) provides a ligand contact to NADP(+).

Belongs to the glutamyl-tRNA reductase family. In terms of assembly, homodimer.

The catalysed reaction is (S)-4-amino-5-oxopentanoate + tRNA(Glu) + NADP(+) = L-glutamyl-tRNA(Glu) + NADPH + H(+). It participates in porphyrin-containing compound metabolism; protoporphyrin-IX biosynthesis; 5-aminolevulinate from L-glutamyl-tRNA(Glu): step 1/2. Functionally, catalyzes the NADPH-dependent reduction of glutamyl-tRNA(Glu) to glutamate 1-semialdehyde (GSA). The polypeptide is Glutamyl-tRNA reductase (Chlamydia muridarum (strain MoPn / Nigg)).